The chain runs to 175 residues: uncharacterized protein (175 aa).

Disordered regions lie at residues 68 to 111 and 154 to 175; these read NKSN…DDDQ and PERA…KLTT. Low complexity predominate over residues 95–106; it reads EEQPMMPYQQPP.

This sequence belongs to the asfivirus H171R family.

It localises to the virion. This is an uncharacterized protein from African swine fever virus (isolate Pig/Kenya/KEN-50/1950) (ASFV).